Reading from the N-terminus, the 311-residue chain is Methionyl-tRNA formyltransferase (311 aa).

Position 109 to 112 (109 to 112 (SLLP)) interacts with (6S)-5,6,7,8-tetrahydrofolate.

Belongs to the Fmt family.

It carries out the reaction L-methionyl-tRNA(fMet) + (6R)-10-formyltetrahydrofolate = N-formyl-L-methionyl-tRNA(fMet) + (6S)-5,6,7,8-tetrahydrofolate + H(+). Functionally, attaches a formyl group to the free amino group of methionyl-tRNA(fMet). The formyl group appears to play a dual role in the initiator identity of N-formylmethionyl-tRNA by promoting its recognition by IF2 and preventing the misappropriation of this tRNA by the elongation apparatus. The sequence is that of Methionyl-tRNA formyltransferase from Acetivibrio thermocellus (strain ATCC 27405 / DSM 1237 / JCM 9322 / NBRC 103400 / NCIMB 10682 / NRRL B-4536 / VPI 7372) (Clostridium thermocellum).